Reading from the N-terminus, the 507-residue chain is Chromosomal replication initiator protein DnaA (507 aa).

A domain I, interacts with DnaA modulators region spans residues 1–112; sequence MTDDPGSGFT…PATDEADDTT (112 aa). The segment at 99-155 is disordered; sequence RIAPPATDEADDTTVPPSENPATTSPDTTTDNDEIDDSAAARGDNQHSWPSYFTERP. Over residues 113 to 127 the composition is skewed to polar residues; it reads VPPSENPATTSPDTT. Residues 113-166 are domain II; sequence VPPSENPATTSPDTTTDNDEIDDSAAARGDNQHSWPSYFTERPHNTDSATAGVT. A domain III, AAA+ region region spans residues 167 to 383; it reads SLNRRYTFDT…GALIRVTAFA (217 aa). ATP is bound by residues Gly-211, Gly-213, Lys-214, and Thr-215. Positions 384 to 507 are domain IV, binds dsDNA; sequence SLNKTPIDKA…TTRIRQRSKR (124 aa).

Belongs to the DnaA family. As to quaternary structure, oligomerizes as a right-handed, spiral filament on DNA at oriC.

The protein resides in the cytoplasm. Plays an essential role in the initiation and regulation of chromosomal replication. ATP-DnaA binds to the origin of replication (oriC) to initiate formation of the DNA replication initiation complex once per cell cycle. Binds the DnaA box (a 9 base pair repeat at the origin) and separates the double-stranded (ds)DNA. Forms a right-handed helical filament on oriC DNA; dsDNA binds to the exterior of the filament while single-stranded (ss)DNA is stabiized in the filament's interior. The ATP-DnaA-oriC complex binds and stabilizes one strand of the AT-rich DNA unwinding element (DUE), permitting loading of DNA polymerase. After initiation quickly degrades to an ADP-DnaA complex that is not apt for DNA replication. Binds acidic phospholipids. The chain is Chromosomal replication initiator protein DnaA from Mycobacterium tuberculosis (strain ATCC 25177 / H37Ra).